Consider the following 887-residue polypeptide: MPSLPQEGVIQGPSPLDLNTELPYQSTMKRKVRKKKKKGTITANVAGTKFEIVRLVIDEMGFMKTPDEDETSNLIWCDSAVQQEKISELQNYQRINHFPGMGEICRKDFLARNMTKMIKSRPLDYTFVPRTWIFPAEYTQFQNYVKELKKKRKQKTFIVKPANGAMGHGISLIRNGDKLPSQDHLIVQEYIEKPFLMEGYKFDLRIYILVTSCDPLKIFLYHDGLVRMGTEKYIPPNESNLTQLYMHLTNYSVNKHNEHFERDETENKGSKRSIKWFTEFLQANQHDVAKFWSDISELVVKTLIVAEPHVLHAYRMCRPGQPPGSESVCFEVLGFDILLDRKLKPWLLEINRAPSFGTDQKIDYDVKRGVLLNALKLLNIRTSDKRRNLAKQKAEAQRRLYGQNSIKRLLPGSSDWEQQRHQLERRKEELKERLAQVRKQISREEHENRHMGNYRRIYPPEDKALLEKYENLLAVAFQTFLSGRAASFQRELNNPLKRMKEEDILDLLEQCEIDDEKLMGKTTKTRGPKPLCSMPESTEIMKRPKYCSSDSSYDSSSSSSESDENEKEEYQNKKREKQVTYNLKPSNHYKLIQQPSSIRRSVSCPRSISAQSPSSGDTRPFSAQQMISVSRPTSASRSHSLNRASSYMRHLPHSNDACSTNSQVSESLRQLKTKEQEDDLTSQTLFVLKDMKIRFPGKSDAESELLIEDIIDNWKYHKTKVASYWLIKLDSVKQRKVLDIVKTSIRTVLPRIWKVPDVEEVNLYRIFNRVFNRLLWSRGQGLWNCFCDSGSSWESIFNKSPEVVTPLQLQCCQRLVELCKQCLLVVYKYATDKRGSLSGIGPDWGNSRYLLPGSTQFFLRTPTYNLKYNSPGMTRSNVLFTSRYGHL.

The disordered stretch occupies residues 1 to 21 (MPSLPQEGVIQGPSPLDLNTE). In terms of domain architecture, TTL spans 38–390 (KGTITANVAG…RTSDKRRNLA (353 aa)). ATP contacts are provided by residues K160, 166–167 (MG), 188–191 (QEYI), and 201–203 (KFD). Residue R227 participates in L-glutamate binding. An ATP-binding site is contributed by 249–250 (TN). Residues Y251, S252, and K271 each contribute to the L-glutamate site. Mg(2+) is bound by residues D336, E349, and N351. K367 is a binding site for L-glutamate. A c-MTBD region region spans residues 388 to 450 (NLAKQKAEAQ…ISREEHENRH (63 aa)). Disordered stretches follow at residues 519-621 (MGKT…TRPF) and 651-676 (LPHSNDACSTNSQVSESLRQLKTKEQ). The segment covering 548–560 (SSDSSYDSSSSSS) has biased composition (low complexity). 2 stretches are compositionally biased toward polar residues: residues 593–621 (QQPSSIRRSVSCPRSISAQSPSSGDTRPF) and 656–670 (DACSTNSQVSESLRQ).

This sequence belongs to the tubulin--tyrosine ligase family. As to quaternary structure, interacts with both alpha- and beta-tubulin (via C-terminal tubulin tails). Mg(2+) is required as a cofactor. Highly expressed in the nervous system including spinal cord, thalamus, hippocampus, hypothalamus and cerebellum.

The protein localises to the cell projection. It is found in the cilium. It localises to the cytoplasm. The protein resides in the cytoskeleton. Its subcellular location is the cilium basal body. The protein localises to the dendrite. It is found in the perikaryon. It carries out the reaction L-glutamyl-[protein] + L-glutamate + ATP = gamma-L-glutamyl-L-glutamyl-[protein] + ADP + phosphate + H(+). It catalyses the reaction (L-glutamyl)(n)-gamma-L-glutamyl-L-glutamyl-[protein] + L-glutamate + ATP = (L-glutamyl)(n+1)-gamma-L-glutamyl-L-glutamyl-[protein] + ADP + phosphate + H(+). In terms of biological role, polyglutamylase which modifies tubulin, generating polyglutamate side chains of variable lengths on the gamma-carboxyl group of specific glutamate residues within the C-terminal tail of tubulin. Mediates both ATP-dependent initiation and elongation steps of the polyglutamylation reaction. Preferentially modifies the beta-tubulin tail over an alpha-tail. Competes with monoglycylase TTLL3 for modification site on beta-tubulin substrate, thereby creating an anticorrelation between glycylation and glutamylation reactions. Required for neurite growth; responsible for the strong increase in tubulin polyglutamylation during postnatal neuronal maturation. The chain is Tubulin polyglutamylase TTLL7 from Homo sapiens (Human).